Here is a 120-residue protein sequence, read N- to C-terminus: Large ribosomal subunit protein uL18 (120 aa).

It belongs to the universal ribosomal protein uL18 family. Part of the 50S ribosomal subunit; part of the 5S rRNA/L5/L18/L25 subcomplex. Contacts the 5S and 23S rRNAs.

Its function is as follows. This is one of the proteins that bind and probably mediate the attachment of the 5S RNA into the large ribosomal subunit, where it forms part of the central protuberance. This chain is Large ribosomal subunit protein uL18, found in Methylobacterium nodulans (strain LMG 21967 / CNCM I-2342 / ORS 2060).